The following is a 195-amino-acid chain: Thymidine kinase (195 aa).

ATP is bound by residues 15–22 (GSMFSGKS) and 88–91 (DEVQ). Glu-89 functions as the Proton acceptor in the catalytic mechanism. Residues Cys-145, Cys-148, Cys-183, and Cys-186 each coordinate Zn(2+).

The protein belongs to the thymidine kinase family. In terms of assembly, homotetramer.

Its subcellular location is the cytoplasm. The catalysed reaction is thymidine + ATP = dTMP + ADP + H(+). The chain is Thymidine kinase from Bacillus cereus (strain ZK / E33L).